Consider the following 196-residue polypeptide: Auxin-induced protein 22B (196 aa).

Positions 18–22 match the EAR-like (transcriptional repression) motif; that stretch reads LRLGL. Residues 44 to 74 form a disordered region; sequence RQVRETSQDSVSISKASHHQQHVETVSAPPP. Residues 99 to 186 enclose the PB1 domain; the sequence is GIFVKVSMDG…SCKRLRIMKG (88 aa).

The protein belongs to the Aux/IAA family. As to quaternary structure, homodimers and heterodimers.

It localises to the nucleus. Its function is as follows. Aux/IAA proteins are short-lived transcriptional factors that function as repressors of early auxin response genes at low auxin concentrations. Repression is thought to result from the interaction with auxin response factors (ARFs), proteins that bind to the auxin-responsive promoter element (AuxRE). Formation of heterodimers with ARF proteins may alter their ability to modulate early auxin response genes expression. The chain is Auxin-induced protein 22B (AUX22B) from Vigna radiata var. radiata (Mung bean).